Consider the following 1818-residue polypeptide: Integrin beta-4 (1818 aa).

Positions 1-28 (MAGPCCSPWVKLLLLAAMLSASLPGDLA) are cleaved as a signal peptide. Residues 29 to 712 (NRCKKAQVKS…HKKKDCPPGS (684 aa)) are Extracellular-facing. Residues 30–74 (RCKKAQVKSCTECIRVDKSCAYCTDELFKERRCNTQAELLAAGCR) enclose the PSI domain. Intrachain disulfides connect C31-C49, C39-C457, C42-C62, C52-C73, C246-C289, C459-C478, C470-C481, and C483-C492. Positions 132–310 (DLYILMDFSN…KTQDYPSVPT (179 aa)) constitute a VWFA domain. Positions 140 and 142 each coordinate Mg(2+). S142, D145, D146, and D177 together coordinate Ca(2+). An involved in NRG1- and IGF1-binding region spans residues 195–200 (WPNSDP). The Ca(2+) site is built by N229, D231, P233, and E234. Position 234 (E234) interacts with Mg(2+). N-linked (GlcNAc...) asparagine glycosylation is present at N328. A Ca(2+)-binding site is contributed by E351. 4 I-EGF domains span residues 459 to 493 (CELQ…KTCN), 494 to 539 (CSTG…HFCE), 540 to 576 (YDNF…RSCD), and 577 to 617 (CPLS…TTCE). Positions 473–475 (RGD) match the Cell attachment site motif. N493 carries N-linked (GlcNAc...) asparagine glycosylation. 11 disulfide bridges follow: C494/C522, C505/C520, C514/C525, C527/C538, C545/C559, C553/C564, C566/C575, C577/C600, C584/C598, C592/C603, and C605/C616. A glycan (N-linked (GlcNAc...) asparagine) is linked at N581. The N-linked (GlcNAc...) asparagine glycan is linked to N619. 4 disulfide bridges follow: C628/C673, C634/C653, C637/C650, and C682/C708. N697 is a glycosylation site (N-linked (GlcNAc...) asparagine). The chain crosses the membrane as a helical span at residues 713-733 (FWWLIPLLIFLLLLLALLLLL). A palmitoylated on several cysteines region spans residues 734–751 (CWKYCACCKACLGLLPCC). Residues 734–1818 (CWKYCACCKA…THMDQQFFQT (1085 aa)) are Cytoplasmic-facing. At S773 the chain carries Phosphoserine. Residues 981 to 1086 (VNITIIKEQA…QVRRFQVQLS (106 aa)) form the Calx-beta domain. The short motif at 1005–1007 (RGD) is the Cell attachment site element. Residues S1071 and S1121 each carry the phosphoserine modification. The tract at residues 1115–1137 (INQTLSSPPPPHGDLGAPQNPNA) is disordered. Fibronectin type-III domains follow at residues 1131–1220 (APQN…THQE) and 1224–1323 (EPGR…TQPK). The segment at 1402-1433 (LSASSGRSDEDGSVAGGVEGEGSGWIRGATPR) is disordered. Gly residues predominate over residues 1415-1426 (VAGGVEGEGSGW). Phosphoserine is present on residues S1451, S1454, and S1470. At T1483 the chain carries Phosphothreonine. S1490 bears the Phosphoserine mark. The residue at position 1526 (T1526) is a Phosphothreonine. 2 consecutive Fibronectin type-III domains span residues 1526–1621 (TPTR…VHPQ) and 1639–1735 (APGP…SQVG). Position 1787 is a phosphoserine (S1787).

This sequence belongs to the integrin beta chain family. As to quaternary structure, heterodimer of an alpha and a beta subunit. Beta-4 associates with alpha-6. Interacts (via cytoplasmic region) with COL17A1 (via cytoplasmic region). Interacts (via cytoplasmic region) with DST isoform 3 (via N-terminus). Interacts (via cytoplasmic domain) with DST (via N-terminus). Interacts with RAC1. ITGA6:ITGB4 is found in a ternary complex with NRG1 and ERBB3. ITGA6:ITGB4 is found in a ternary complex with IGF1 and IGF1R. ITGA6:ITGB4 interacts with IGF2. Interacts with TMEM268; this interaction prevents ITGB4 degradation. Post-translationally, palmitoylated by DHHC3 at several cysteines of the membrane-proximal region, enhancing stability and cell surface expression. Palmitoylation also promotes secondary association with tertaspanins.

The protein resides in the cell membrane. It localises to the cell junction. It is found in the hemidesmosome. Functionally, integrin alpha-6/beta-4 is a receptor for laminin. It plays a critical structural role in the hemidesmosome of epithelial cells. Is required for the regulation of keratinocyte polarity and motility. ITGA6:ITGB4 binds to NRG1 (via EGF domain) and this binding is essential for NRG1-ERBB signaling. ITGA6:ITGB4 binds to IGF1 and this binding is essential for IGF1 signaling. ITGA6:ITGB4 binds to IGF2 and this binding is essential for IGF2 signaling. The polypeptide is Integrin beta-4 (Itgb4) (Mus musculus (Mouse)).